The following is a 181-amino-acid chain: Inner membrane-spanning protein YciB (181 aa).

Helical transmembrane passes span 3 to 23 (LLFD…FGIY), 54 to 74 (SLAI…PWFI), 81 to 101 (IYWL…KPLI), 119 to 139 (LNLA…YVAY), and 149 to 169 (FKLF…AFYL).

The protein belongs to the YciB family.

The protein resides in the cell inner membrane. In terms of biological role, plays a role in cell envelope biogenesis, maintenance of cell envelope integrity and membrane homeostasis. The protein is Inner membrane-spanning protein YciB of Legionella pneumophila subsp. pneumophila (strain Philadelphia 1 / ATCC 33152 / DSM 7513).